A 329-amino-acid chain; its full sequence is Sideroflexin-1.1 (329 aa).

5 consecutive transmembrane segments (helical) span residues 100 to 122 (MPGN…GVVF), 150 to 167 (LFVS…VALG), 178 to 198 (LAAR…NIPM), 232 to 254 (VTLS…MNRI), and 274 to 294 (IQTL…CALF).

The protein belongs to the sideroflexin family.

The protein resides in the mitochondrion inner membrane. The catalysed reaction is L-serine(in) = L-serine(out). It catalyses the reaction L-alanine(in) = L-alanine(out). The enzyme catalyses L-cysteine(in) = L-cysteine(out). Its function is as follows. Amino acid transporter importing serine, an essential substrate of the mitochondrial branch of the one-carbon pathway, into mitochondria. Mitochondrial serine is then converted to glycine and formate, which exits to the cytosol where it is used to generate the charged folates that serve as one-carbon donors. May also transport other amino acids including alanine and cysteine. The sequence is that of Sideroflexin-1.1 from Caenorhabditis elegans.